The chain runs to 824 residues: Leucine--tRNA ligase (824 aa).

The 'HIGH' region motif lies at 40–50 (PYPSGKIHMGH). Residues 580 to 584 (KMSKS) carry the 'KMSKS' region motif. Position 583 (lysine 583) interacts with ATP.

Belongs to the class-I aminoacyl-tRNA synthetase family.

It localises to the cytoplasm. The catalysed reaction is tRNA(Leu) + L-leucine + ATP = L-leucyl-tRNA(Leu) + AMP + diphosphate. The sequence is that of Leucine--tRNA ligase from Alkaliphilus metalliredigens (strain QYMF).